The sequence spans 176 residues: Nicotinamide-nucleotide adenylyltransferase (176 aa).

This sequence belongs to the archaeal NMN adenylyltransferase family.

The protein localises to the cytoplasm. It carries out the reaction beta-nicotinamide D-ribonucleotide + ATP + H(+) = diphosphate + NAD(+). Its pathway is cofactor biosynthesis; NAD(+) biosynthesis; NAD(+) from nicotinamide D-ribonucleotide: step 1/1. This Halorubrum lacusprofundi (strain ATCC 49239 / DSM 5036 / JCM 8891 / ACAM 34) protein is Nicotinamide-nucleotide adenylyltransferase.